We begin with the raw amino-acid sequence, 344 residues long: Eukaryotic translation initiation factor 2 subunit alpha homolog (344 aa).

An S1 motif domain is found at 21–92 (DMAVMIQVKN…EKGYIDLSKR (72 aa)). S56 carries the post-translational modification Phosphoserine; by GCN2. The segment at 312–344 (DNEEMSGDEDSGDEEEDTGMGEVDLDAGAGIIE) is disordered. Residues 314 to 336 (EEMSGDEDSGDEEEDTGMGEVDL) show a composition bias toward acidic residues.

It belongs to the eIF-2-alpha family. As to quaternary structure, heterotrimer composed of an alpha, a beta and a gamma chain. Phosphorylated at Ser-56 by GCN2.

Its function is as follows. Functions in the early steps of protein synthesis by forming a ternary complex with GTP and initiator tRNA. This complex binds to a 40S ribosomal subunit, followed by mRNA binding to form a 43S pre-initiation complex. Junction of the 60S ribosomal subunit to form the 80S initiation complex is preceded by hydrolysis of the GTP bound to eIF-2 and release of an eIF-2-GDP binary complex. In order for eIF-2 to recycle and catalyze another round of initiation, the GDP bound to eIF-2 must exchange with GTP by way of a reaction catalyzed by eIF-2B. This is Eukaryotic translation initiation factor 2 subunit alpha homolog from Arabidopsis thaliana (Mouse-ear cress).